Here is a 660-residue protein sequence, read N- to C-terminus: Bifunctional polymyxin resistance protein ArnA (660 aa).

The tract at residues 1–304 (MKTVVFAYHD…TLGLVQGSRL (304 aa)) is formyltransferase ArnAFT. 86–88 (HLI) lines the (6R)-10-formyltetrahydrofolate pocket. Histidine 104 acts as the Proton donor; for formyltransferase activity in catalysis. (6R)-10-formyltetrahydrofolate-binding positions include arginine 114 and 136–140 (VKRAD). The tract at residues 314 to 660 (RRTRVLILGV…RTVDLTDKPS (347 aa)) is dehydrogenase ArnADH. Residues aspartate 347 and 368 to 369 (DI) contribute to the NAD(+) site. Residues alanine 393, tyrosine 398, and 432-433 (TS) contribute to the UDP-alpha-D-glucuronate site. Glutamate 434 (proton acceptor; for decarboxylase activity) is an active-site residue. Residues arginine 460, asparagine 492, 526-535 (KLIDGGKQKR), and tyrosine 613 contribute to the UDP-alpha-D-glucuronate site. The Proton donor; for decarboxylase activity role is filled by arginine 619.

In the N-terminal section; belongs to the Fmt family. UDP-L-Ara4N formyltransferase subfamily. The protein in the C-terminal section; belongs to the NAD(P)-dependent epimerase/dehydratase family. UDP-glucuronic acid decarboxylase subfamily. Homohexamer, formed by a dimer of trimers.

It catalyses the reaction UDP-alpha-D-glucuronate + NAD(+) = UDP-beta-L-threo-pentopyranos-4-ulose + CO2 + NADH. It carries out the reaction UDP-4-amino-4-deoxy-beta-L-arabinose + (6R)-10-formyltetrahydrofolate = UDP-4-deoxy-4-formamido-beta-L-arabinose + (6S)-5,6,7,8-tetrahydrofolate + H(+). It functions in the pathway nucleotide-sugar biosynthesis; UDP-4-deoxy-4-formamido-beta-L-arabinose biosynthesis; UDP-4-deoxy-4-formamido-beta-L-arabinose from UDP-alpha-D-glucuronate: step 1/3. The protein operates within nucleotide-sugar biosynthesis; UDP-4-deoxy-4-formamido-beta-L-arabinose biosynthesis; UDP-4-deoxy-4-formamido-beta-L-arabinose from UDP-alpha-D-glucuronate: step 3/3. Its pathway is bacterial outer membrane biogenesis; lipopolysaccharide biosynthesis. Bifunctional enzyme that catalyzes the oxidative decarboxylation of UDP-glucuronic acid (UDP-GlcUA) to UDP-4-keto-arabinose (UDP-Ara4O) and the addition of a formyl group to UDP-4-amino-4-deoxy-L-arabinose (UDP-L-Ara4N) to form UDP-L-4-formamido-arabinose (UDP-L-Ara4FN). The modified arabinose is attached to lipid A and is required for resistance to polymyxin and cationic antimicrobial peptides. In Escherichia coli O6:H1 (strain CFT073 / ATCC 700928 / UPEC), this protein is Bifunctional polymyxin resistance protein ArnA.